The primary structure comprises 493 residues: Occludin (493 aa).

Residues 1 to 47 (MYSRPSNYAPSKDVYGGEMRSQPAYSYYPEEEIQHFYRWSSPPGIIK) lie on the Cytoplasmic side of the membrane. One can recognise an MARVEL domain in the interval 41–250 (SPPGIIKIMS…IIFFAVKTRK (210 aa)). The helical transmembrane segment at 48 to 70 (IMSILIVVMCVGIFACVASTLPW) threads the bilayer. Topologically, residues 71-116 (DLDITGQSMGYGMGSGSYSGGYTGYGFGGSQMGLGFAYGGNYTDPR) are extracellular. A helical membrane pass occupies residues 117 to 141 (AAKGFILAMAAFCFIIGLVIFVMLV). The Cytoplasmic portion of the chain corresponds to 142–151 (TRTPLSTSRK). Residues 152 to 176 (FYLIVIIVSAIIGGLVFIATIVYTV) traverse the membrane as a helical segment. Topologically, residues 177 to 224 (GVNPVAQASGSAFYTQIVSICNQFYSPVQTGVFVNQYLYHYCVVEPQE) are extracellular. A disulfide bridge connects residues Cys197 and Cys218. A helical transmembrane segment spans residues 225–246 (AIAIVLGFLIVVAFAIIIFFAV). The Cytoplasmic segment spans residues 247 to 493 (KTRKKINQYG…IKQMVSNYDK (247 aa)). The interval 334–407 (YGMSPRHYSS…TKQRQEYKQE (74 aa)) is disordered. Basic residues predominate over residues 352–361 (APPKKRPGKP). Phosphothreonine; by CK2; in vitro is present on Thr375. At Ser379 the chain carries Phosphoserine; by CK2; in vitro. The span at 379-389 (SADELEDDSWD) shows a compositional bias: acidic residues. The OCEL domain occupies 386-493 (DSWDSEYPPI…IKQMVSNYDK (108 aa)). A coiled-coil region spans residues 396-428 (TQTKQRQEYKQEFASDLHEYKRLQAELDELSKI).

This sequence belongs to the ELL/occludin family. Interacts in vitro with cingulin, possibly directly. Interacts with ZO-1. In terms of processing, phosphorylated. In terms of tissue distribution, localized at tight junctions of both epithelial and endothelial cells.

Its subcellular location is the cell membrane. The protein resides in the cell junction. It is found in the tight junction. Probably plays a role in the formation and regulation of the tight junction (TJ) paracellular permeability barrier. In Xenopus laevis (African clawed frog), this protein is Occludin (ocln).